Here is a 182-residue protein sequence, read N- to C-terminus: Crossover junction endodeoxyribonuclease RuvC (182 aa).

Residues aspartate 7, glutamate 69, and aspartate 141 contribute to the active site. Mg(2+) is bound by residues aspartate 7, glutamate 69, and aspartate 141.

This sequence belongs to the RuvC family. As to quaternary structure, homodimer which binds Holliday junction (HJ) DNA. The HJ becomes 2-fold symmetrical on binding to RuvC with unstacked arms; it has a different conformation from HJ DNA in complex with RuvA. In the full resolvosome a probable DNA-RuvA(4)-RuvB(12)-RuvC(2) complex forms which resolves the HJ. It depends on Mg(2+) as a cofactor.

The protein resides in the cytoplasm. It carries out the reaction Endonucleolytic cleavage at a junction such as a reciprocal single-stranded crossover between two homologous DNA duplexes (Holliday junction).. In terms of biological role, the RuvA-RuvB-RuvC complex processes Holliday junction (HJ) DNA during genetic recombination and DNA repair. Endonuclease that resolves HJ intermediates. Cleaves cruciform DNA by making single-stranded nicks across the HJ at symmetrical positions within the homologous arms, yielding a 5'-phosphate and a 3'-hydroxyl group; requires a central core of homology in the junction. The consensus cleavage sequence is 5'-(A/T)TT(C/G)-3'. Cleavage occurs on the 3'-side of the TT dinucleotide at the point of strand exchange. HJ branch migration catalyzed by RuvA-RuvB allows RuvC to scan DNA until it finds its consensus sequence, where it cleaves and resolves the cruciform DNA. This Polaromonas sp. (strain JS666 / ATCC BAA-500) protein is Crossover junction endodeoxyribonuclease RuvC.